The primary structure comprises 439 residues: Tubulin beta chain (439 aa).

GTP-binding residues include Gln11, Glu69, Ser138, Gly142, Thr143, Gly144, Asn204, and Asn226. Glu69 lines the Mg(2+) pocket.

The protein belongs to the tubulin family. In terms of assembly, dimer of alpha and beta chains. A typical microtubule is a hollow water-filled tube with an outer diameter of 25 nm and an inner diameter of 15 nM. Alpha-beta heterodimers associate head-to-tail to form protofilaments running lengthwise along the microtubule wall with the beta-tubulin subunit facing the microtubule plus end conferring a structural polarity. Microtubules usually have 13 protofilaments but different protofilament numbers can be found in some organisms and specialized cells. Requires Mg(2+) as cofactor.

It is found in the cytoplasm. Its subcellular location is the cytoskeleton. Functionally, tubulin is the major constituent of microtubules, a cylinder consisting of laterally associated linear protofilaments composed of alpha- and beta-tubulin heterodimers. Microtubules grow by the addition of GTP-tubulin dimers to the microtubule end, where a stabilizing cap forms. Below the cap, tubulin dimers are in GDP-bound state, owing to GTPase activity of alpha-tubulin. This is Tubulin beta chain (TUB2) from Encephalitozoon cuniculi (strain GB-M1) (Microsporidian parasite).